The sequence spans 291 residues: 5'-3' exonuclease (291 aa).

The 5'-3' exonuclease domain occupies 176-269 (APYQVVEYKG…DLTGLKPIQK (94 aa)).

Its function is as follows. 5'-3' exonuclease acting preferentially on double-stranded DNA. The polypeptide is 5'-3' exonuclease (polA) (Mycoplasma genitalium (strain ATCC 33530 / DSM 19775 / NCTC 10195 / G37) (Mycoplasmoides genitalium)).